Consider the following 229-residue polypeptide: Transmembrane protein 182 (229 aa).

The N-terminal stretch at 1-26 (MRLNIAIFFGALFGALGVLLFLVAFG) is a signal peptide. Topologically, residues 27–114 (SDYWLLATEV…SYDSAVIYRG (88 aa)) are extracellular. N-linked (GlcNAc...) asparagine glycosylation is present at Asn-47. The interval 49-59 (TFHHEGFFWRC) is interaction with ITGB1. N-linked (GlcNAc...) asparagine glycosylation occurs at Asn-102. The helical transmembrane segment at 115–135 (FWAVLMLLGVVAVVIASFLII) threads the bilayer. At 136–153 (CAAPFASHFLYKAGGGSY) the chain is on the cytoplasmic side. The helical transmembrane segment at 154–174 (IAAGILFSLVVMLYVIWVQAV) threads the bilayer. The Extracellular segment spans residues 175 to 200 (ADMESYRNMKMKDCLDFTPSVLYGWS). A helical membrane pass occupies residues 201 to 221 (FFLAPAGIFFSLLAGLLFLVV). Residues 222 to 229 (GWHIQIHH) are Cytoplasmic-facing.

This sequence belongs to the TMEM182 family. Interacts with ITGB1.

It is found in the cell membrane. Functionally, negatively regulates myogenesis and skeletal muscle regeneration via its association with ITGB1. Modulates ITGB1 activation by decreasing ITGB1-LAMB1 interaction and inhibiting ITGB1-mediated intracellular signaling during myogenesis. The chain is Transmembrane protein 182 (TMEM182) from Homo sapiens (Human).